The following is a 1256-amino-acid chain: Topoisomerase 1-associated factor 1 (1256 aa).

Residues 26 to 38 (GFIVSDEENDNLE) are compositionally biased toward acidic residues. Disordered stretches follow at residues 26-58 (GFIV…VDEY), 695-725 (SKKK…RTHA), 1052-1121 (SGAE…EAFF), and 1176-1256 (SDGV…DEDE). Over residues 39–53 (NENRNERDPDSRNQD) the composition is skewed to basic and acidic residues. The segment covering 1060-1086 (GKARKRGNKSSSTIKKKSLQSRSRRPP) has biased composition (basic residues). Basic and acidic residues-rich tracts occupy residues 1097–1110 (ELRK…FVHD) and 1179–1190 (VDTHSHQDDKSQ). The segment covering 1194–1204 (SENEDSSEEVS) has biased composition (acidic residues). Residues 1222–1231 (DNNVSENYVS) show a composition bias toward low complexity.

Belongs to the timeless family. Component of the fork protection complex (FPC) consisting of TOF1 and CSM3.

Its subcellular location is the nucleus. Forms a fork protection complex (FPC) with CSM3 and which is required for chromosome segregation during meiosis and DNA damage repair. FPC coordinates leading and lagging strand synthesis and moves with the replication fork. FPC stabilizes replication forks in a configuration that is recognized by replication checkpoint sensors. The protein is Topoisomerase 1-associated factor 1 (TOF1) of Scheffersomyces stipitis (strain ATCC 58785 / CBS 6054 / NBRC 10063 / NRRL Y-11545) (Yeast).